The sequence spans 201 residues: Glutathione peroxidase 1 (201 aa).

S32 is modified (phosphoserine). U47 is a catalytic residue. A non-standard amino acid (selenocysteine) is located at residue U47. N6-acetyllysine; alternate occurs at positions 86, 112, and 146. Residues K86, K112, and K146 each carry the N6-succinyllysine; alternate modification. Residues S195 and S199 each carry the phosphoserine modification.

The protein belongs to the glutathione peroxidase family. In terms of assembly, homotetramer. Interacts with MIEN1. In terms of processing, during periods of oxidative stress, Sec-47 may react with a superoxide radical, irreversibly lose hydroselenide and be converted to dehydroalanine.

It localises to the cytoplasm. It is found in the mitochondrion. It catalyses the reaction 2 glutathione + H2O2 = glutathione disulfide + 2 H2O. It carries out the reaction a hydroperoxy polyunsaturated fatty acid + 2 glutathione = a hydroxy polyunsaturated fatty acid + glutathione disulfide + H2O. The enzyme catalyses tert-butyl hydroperoxide + 2 glutathione = tert-butanol + glutathione disulfide + H2O. The catalysed reaction is cumene hydroperoxide + 2 glutathione = 2-phenylpropan-2-ol + glutathione disulfide + H2O. It catalyses the reaction (13S)-hydroperoxy-(9Z,11E)-octadecadienoate + 2 glutathione = (13S)-hydroxy-(9Z,11E)-octadecadienoate + glutathione disulfide + H2O. It carries out the reaction (9S)-hydroperoxy-(10E,12Z)-octadecadienoate + 2 glutathione = (9S)-hydroxy-(10E,12Z)-octadecadienoate + glutathione disulfide + H2O. The enzyme catalyses (5S)-hydroperoxy-(6E,8Z,11Z,14Z)-eicosatetraenoate + 2 glutathione = (5S)-hydroxy-(6E,8Z,11Z,14Z)-eicosatetraenoate + glutathione disulfide + H2O. The catalysed reaction is (12S)-hydroperoxy-(5Z,8Z,10E,14Z)-eicosatetraenoate + 2 glutathione = (12S)-hydroxy-(5Z,8Z,10E,14Z)-eicosatetraenoate + glutathione disulfide + H2O. It catalyses the reaction (12R)-hydroperoxy-(5Z,8Z,10E,14Z)-eicosatetraenoate + 2 glutathione = (12R)-hydroxy-(5Z,8Z,10E,14Z)-eicosatetraenoate + glutathione disulfide + H2O. It carries out the reaction (15S)-hydroperoxy-(5Z,8Z,11Z,13E)-eicosatetraenoate + 2 glutathione = (15S)-hydroxy-(5Z,8Z,11Z,13E)-eicosatetraenoate + glutathione disulfide + H2O. The enzyme catalyses (5S)-hydroperoxy-(6E,8Z,11Z,14Z,17Z)-eicosapentaenoate + 2 glutathione = (5S)-hydroxy-(6E,8Z,11Z,14Z,17Z)-eicosapentaenoate + glutathione disulfide + H2O. The catalysed reaction is (12S)-hydroperoxy-(5Z,8Z,10E,14Z,17Z)-eicosapentaenoate + 2 glutathione = (12S)-hydroxy-(5Z,8Z,10E,14Z,17Z)-eicosapentaenoate + glutathione disulfide + H2O. It catalyses the reaction (15S)-hydroperoxy-(5Z,8Z,11Z,13E,17Z)-eicosapentaenoate + 2 glutathione = (15S)-hydroxy-(5Z,8Z,11Z,13E,17Z)-eicosapentaenoate + glutathione disulfide + H2O. It carries out the reaction (15S)-hydroperoxy-(11Z,13E)-eicosadienoate + 2 glutathione = (15S)-hydroxy-(11Z,13E)-eicosadienoate + glutathione disulfide + H2O. The enzyme catalyses (17S)-hydroperoxy-(4Z,7Z,10Z,13Z,15E,19Z)-docosahexaenoate + 2 glutathione = (17S)-hydroxy-(4Z,7Z,10Z,13Z,15E,19Z)-docosahexaenoate + glutathione disulfide + H2O. Its function is as follows. Catalyzes the reduction of hydroperoxides in a glutathione-dependent manner thus regulating cellular redox homeostasis. Can reduce small soluble hydroperoxides such as H2O2, cumene hydroperoxide and tert-butyl hydroperoxide, as well as several fatty acid-derived hydroperoxides. In platelets catalyzes the reduction of 12-hydroperoxyeicosatetraenoic acid, the primary product of the arachidonate 12-lipoxygenase pathway. The sequence is that of Glutathione peroxidase 1 (GPX1) from Pongo pygmaeus (Bornean orangutan).